The chain runs to 102 residues: Small ribosomal subunit protein uS10 (102 aa).

This sequence belongs to the universal ribosomal protein uS10 family. As to quaternary structure, part of the 30S ribosomal subunit.

Functionally, involved in the binding of tRNA to the ribosomes. This is Small ribosomal subunit protein uS10 from Roseiflexus sp. (strain RS-1).